We begin with the raw amino-acid sequence, 123 residues long: uncharacterized protein (123 aa).

A helical transmembrane segment spans residues 14 to 34 (VVLKITAVVCSVFSIRVLILA).

The protein resides in the membrane. This is an uncharacterized protein from Saccharomyces cerevisiae (strain ATCC 204508 / S288c) (Baker's yeast).